The following is a 333-amino-acid chain: uncharacterized protein (333 aa).

The protein belongs to the proline racemase family.

This is an uncharacterized protein from Vibrio parahaemolyticus serotype O3:K6 (strain RIMD 2210633).